The chain runs to 643 residues: Threonine--tRNA ligase (643 aa).

The TGS domain occupies 1–61; the sequence is MPIITLPDGS…SEDSSLEIIT (61 aa). The tract at residues 243-534 is catalytic; sequence DHRRIGKALD…ITEEYAGFFP (292 aa). Positions 334, 385, and 511 each coordinate Zn(2+).

Belongs to the class-II aminoacyl-tRNA synthetase family. Homodimer. Zn(2+) is required as a cofactor.

The protein localises to the cytoplasm. It carries out the reaction tRNA(Thr) + L-threonine + ATP = L-threonyl-tRNA(Thr) + AMP + diphosphate + H(+). Its function is as follows. Catalyzes the attachment of threonine to tRNA(Thr) in a two-step reaction: L-threonine is first activated by ATP to form Thr-AMP and then transferred to the acceptor end of tRNA(Thr). Also edits incorrectly charged L-seryl-tRNA(Thr). This is Threonine--tRNA ligase from Actinobacillus pleuropneumoniae serotype 7 (strain AP76).